Consider the following 244-residue polypeptide: Monothiol glutaredoxin-4 (244 aa).

Residues 2–106 (SVEITFVEQF…LKAAIDEYIQ (105 aa)) form the Thioredoxin domain. In terms of domain architecture, Glutaredoxin spans 147-244 (NERLSTLTNA…NGELQEMLPN (98 aa)). Lys-164 contributes to the glutathione binding site. Cys-172 contacts [2Fe-2S] cluster. Glutathione is bound by residues 201–205 (RQGLK) and 226–227 (LD).

Belongs to the glutaredoxin family. Monothiol subfamily. As to quaternary structure, homodimer. Interacts with php4.

It localises to the cytoplasm. The protein resides in the nucleus. Monothiol glutaredoxin involved in the biogenesis of iron-sulfur clusters. Binds one iron-sulfur cluster per dimer. The iron-sulfur cluster is bound between subunits, and is complexed by a bound glutathione and a cysteine residue from each subunit. This is Monothiol glutaredoxin-4 (grx4) from Schizosaccharomyces pombe (strain 972 / ATCC 24843) (Fission yeast).